The chain runs to 417 residues: 26S proteasome regulatory subunit RPN14 (417 aa).

WD repeat units follow at residues 134 to 173 (AHVS…NPRT), 176 to 215 (GHRA…TIHT), 242 to 281 (ISTS…QTIQ), 285 to 325 (KFTC…CPVG), 330 to 371 (NEGT…PAIE), and 380 to 416 (SNDD…NLSN).

The protein belongs to the WD repeat PAAF1/RPN14 family. Associates with the 19S proteasome regulatory particle (RP). Interacts directly with RPT5 and RPT6.

Its subcellular location is the cytoplasm. It localises to the nucleus. In terms of biological role, acts as a regulatory subunit of the 26 proteasome which is involved in the ATP-dependent degradation of ubiquitinated proteins. Is not a genuine component of the 26S proteasome, but an auxiliary factor that interacts with the proteasomal ATPase of 19S regulatory particle (RP). Acts as a chaperone which regulates the highly structured assembly of the 19S regulatory particle. Involved in the substrate specificity of the 26S proteasome and is especially involved in the degradation of ubiquitinated GCN4. May contribute to the stability of the 26S proteasome in some stress conditions. In Saccharomyces cerevisiae (strain ATCC 204508 / S288c) (Baker's yeast), this protein is 26S proteasome regulatory subunit RPN14 (RPN14).